Reading from the N-terminus, the 333-residue chain is MKLTALNSTVRRALLNGRNQNGNRLGSAALMPYAAAETRLLCAGGANGWFFYWKRTMVSPAEAKVPEKEKEKEKAKAEKSVVESSYWGISRPKVVREDGTEWPWNCFMPWESYRSNVSIDLTKHHVPKNVLDKVAYRTVKLLRIPTDLFFKRRYGCRAMMLETVAAVPGMVGGMLLHLRSLRKFQQSGGWIKALLEEAENERMHLMTMVELVKPKWYERLLVLAVQGVFFNAFFVLYILSPKVAHRIVGYLEEEAIHSYTEYLKDLESGAIENVPAPAIAIDYWRLPKDARLKDVITVIRADEAHHRDVNHFASDIHFQGKELREAPAPIGYH.

A helical membrane pass occupies residues A158–L178. Fe cation-binding residues include E162, E201, and H204. A helical membrane pass occupies residues L220–S240. Fe cation-binding residues include E252, E303, and H306.

The protein belongs to the alternative oxidase family. As to quaternary structure, homodimer; disulfide-linked. The cofactor is Fe cation.

It localises to the mitochondrion inner membrane. It carries out the reaction 2 a ubiquinol + O2 = 2 a ubiquinone + 2 H2O. Its function is as follows. Catalyzes the cyanide-resistant oxidation of ubiquinol and the reduction of molecular oxygen to water, but does not translocate protons and consequently is not linked to oxidative phosphorylation. May increase respiration when the cytochrome respiratory pathway is restricted, or in response to low temperatures. This Glycine max (Soybean) protein is Ubiquinol oxidase 2, mitochondrial (AOX2).